A 325-amino-acid polypeptide reads, in one-letter code: Flotillin-like protein FloA (325 aa).

2 helical membrane passes run 4 to 24 (LGIV…FSFI) and 26 to 46 (VGLW…TLVA).

This sequence belongs to the flotillin-like FloA family. As to quaternary structure, homooligomerizes.

It localises to the cell membrane. Its subcellular location is the membrane raft. In terms of biological role, found in functional membrane microdomains (FMM) that may be equivalent to eukaryotic membrane rafts. FMMs are highly dynamic and increase in number as cells age. Flotillins are thought to be important factors in membrane fluidity. This chain is Flotillin-like protein FloA, found in Thermus thermophilus (strain ATCC BAA-163 / DSM 7039 / HB27).